Here is a 1894-residue protein sequence, read N- to C-terminus: 1,3-beta-glucan synthase component bgs2 (1894 aa).

2 disordered regions span residues 1–53 (MSWH…DSNK) and 282–310 (GPKI…PETS). Polar residues predominate over residues 32–51 (EFNNPGEESTYPQANSWNDS). Over residues 286-296 (KQAKKKQKRKS) the composition is skewed to basic residues. The next 16 membrane-spanning stretches (helical) occupy residues 530 to 550 (VSLG…FEWI), 566 to 586 (FLIL…VFGF), 600 to 620 (VAIV…LVPL), 655 to 675 (VSWG…YFFL), 710 to 730 (ILLG…TYLW), 731 to 751 (YILV…ISIW), 1338 to 1358 (IFIM…GGMY), 1394 to 1414 (CIIS…VQEL), 1476 to 1498 (LLFS…MLLF), 1503 to 1525 (VWIP…PFIF), 1598 to 1618 (FTEI…YFFI), 1637 to 1657 (ILIL…TFAG), 1673 to 1693 (FGAV…IIVF), 1697 to 1717 (WYLE…IIAI), 1778 to 1798 (DFFL…IPFI), and 1837 to 1857 (TMFF…LVVA).

Belongs to the glycosyltransferase 48 family. Component of the 1,3-beta-glucan synthase (GS) complex, composed of at least the alternate catalytic subunits bgs1, bgs2, bgs3, and bgs4, and a regulatory subunit chr4.

It localises to the prospore membrane. It catalyses the reaction [(1-&gt;3)-beta-D-glucosyl](n) + UDP-alpha-D-glucose = [(1-&gt;3)-beta-D-glucosyl](n+1) + UDP + H(+). Its function is as follows. Alternate catalytic subunit of the 1,3-beta-glucan synthase (GS) complex. Synthesizes 1,3-beta-glucan, a major structural component of the yeast cell wall. Has a role in ascospore development where it is required for the assembly of a functional spore wall. This chain is 1,3-beta-glucan synthase component bgs2, found in Schizosaccharomyces pombe (strain 972 / ATCC 24843) (Fission yeast).